We begin with the raw amino-acid sequence, 278 residues long: NAD kinase (278 aa).

Asp56 serves as the catalytic Proton acceptor. Residues Asp56–Gly57, Asn132–Glu133, Arg158, Asp160, and Thr171–Ser176 contribute to the NAD(+) site.

Belongs to the NAD kinase family. It depends on a divalent metal cation as a cofactor.

It is found in the cytoplasm. The catalysed reaction is NAD(+) + ATP = ADP + NADP(+) + H(+). In terms of biological role, involved in the regulation of the intracellular balance of NAD and NADP, and is a key enzyme in the biosynthesis of NADP. Catalyzes specifically the phosphorylation on 2'-hydroxyl of the adenosine moiety of NAD to yield NADP. This Streptococcus agalactiae serotype V (strain ATCC BAA-611 / 2603 V/R) protein is NAD kinase.